Consider the following 506-residue polypeptide: MILRSSLGRLGVARESPLCLQCLNRSRPSFPAVNKLASISRLQSTVAGQSPSSSVNKTYFSSHKGDSHLTPQPSLFTSLSPSNSPSQLNRGHSTPSTSPELSELPHRRRKRLKEAAAQNNGAEPVIPPDASAQLSNFSSTLPKTSLRRKLAAFFALTKPRLSFLVLLSTTSAYGIYPVSSILALDPTIAPLPTLSTSTLTFLYLTTGTFLSACSANTLNMIFEPKYDAQMSRTRNRPLVRGLVTRRAAVFFAIATAAVGLGLLYFGTNPTVTGLSAANIALYAFVYTPLKRMHVINTWIGAIVGGIPPMMGWVAAAGQGATTGHDTWRDMLFGENSLGGWLLGGILFAWQFPHFNALSHTIREEYKGAGYKMLCWTNPARNARVALRYSVLMFPLSIGLWWAGIVGHGFLVSSTVANGWLTKEAYGFWKHQGANGTARGLFWASIWQLPILLVGALVTKKGLWDGVWGGIFGQPIEDDDDDYVYYEEVSPGKTINQSPTSPSSPVV.

The transit peptide at 1–42 directs the protein to the mitochondrion; the sequence is MILRSSLGRLGVARESPLCLQCLNRSRPSFPAVNKLASISRL. A compositionally biased stretch (polar residues) spans 45–61; it reads TVAGQSPSSSVNKTYFS. Residues 45–131 are disordered; sequence TVAGQSPSSS…AEPVIPPDAS (87 aa). Over residues 73 to 88 the composition is skewed to low complexity; sequence PSLFTSLSPSNSPSQL. A compositionally biased stretch (polar residues) spans 89 to 100; sequence NRGHSTPSTSPE. Helical transmembrane passes span 163-183, 199-221, 247-267, 269-289, 297-317, 337-357, 390-410, and 439-459; these read FLVL…SILA, LTFL…LNMI, AAVF…YFGT, PTVT…YTPL, TWIG…AAAG, LGGW…FNAL, VLMF…HGFL, and GLFW…LVTK.

The protein belongs to the UbiA prenyltransferase family.

It localises to the mitochondrion membrane. The catalysed reaction is heme b + (2E,6E)-farnesyl diphosphate + H2O = Fe(II)-heme o + diphosphate. Converts protoheme IX and farnesyl diphosphate to heme O. In Emericella nidulans (strain FGSC A4 / ATCC 38163 / CBS 112.46 / NRRL 194 / M139) (Aspergillus nidulans), this protein is Protoheme IX farnesyltransferase, mitochondrial (cox10).